We begin with the raw amino-acid sequence, 469 residues long: Protopanaxadiol 6-hydroxylase (469 aa).

The chain crosses the membrane as a helical span at residues 3-23 (LFISSQLLLLLVFCLFLFWNF). Cysteine 416 is a heme binding site.

It belongs to the cytochrome P450 family. Requires heme as cofactor. In terms of tissue distribution, accumulates ubiquitously in all organs of plants, including roots, stems and leaves.

It is found in the membrane. The enzyme catalyses (20S)-protopanaxadiol + reduced [NADPH--hemoprotein reductase] + O2 = (20S)-protopanaxatriol + oxidized [NADPH--hemoprotein reductase] + H2O + H(+). Its pathway is secondary metabolite biosynthesis; terpenoid biosynthesis. Its activity is regulated as follows. Activated by N,N'-dicyclohexylcarbodiimide (DCCD) thus leading to increased ginsenosides accumulation. Component of the dammarane-type triterpene saponins (e.g. PPT-type ginsenosides or panaxosides) biosynthetic pathway. Catalyzes the formation of protopanaxatriol from protopanaxadiol during ginsenoside biosynthesis, a class of tetracyclic triterpenoid saponins. This Panax ginseng (Korean ginseng) protein is Protopanaxadiol 6-hydroxylase.